Here is a 146-residue protein sequence, read N- to C-terminus: UPF0756 membrane protein PTH_1817 (146 aa).

4 helical membrane-spanning segments follow: residues 6–26 (LLIGMAAHSSLIVIAACILLI), 46–66 (MGLTFLLLSILVPLASGKASW), 69–89 (IISSLASFSGLLAVAGGALAT), and 105–125 (IVFGLLLGSILGIVFLHGIPV).

This sequence belongs to the UPF0756 family.

It is found in the cell membrane. This chain is UPF0756 membrane protein PTH_1817, found in Pelotomaculum thermopropionicum (strain DSM 13744 / JCM 10971 / SI).